The sequence spans 297 residues: Transmembrane protein 178A (297 aa).

Positions 1-25 (MEPRALVTALSLGLSLCSLGLLVTA) are cleaved as a signal peptide. Topologically, residues 26–179 (IFTDHWYETD…LLHLRRITAG (154 aa)) are extracellular. Residues 41-57 (ESCERSRAGADPPDQKN) are compositionally biased toward basic and acidic residues. Residues 41-86 (ESCERSRAGADPPDQKNRLMPLSHLPLRDSPPLGRRLLPGGPGRSD) form a disordered region. Positions 68 to 79 (RDSPPLGRRLLP) are enriched in low complexity. Residue N158 is glycosylated (N-linked (GlcNAc...) asparagine). Residues 180–200 (FLGMAVAVLLCGCIVATVSFF) traverse the membrane as a helical segment. Residues 201–208 (WEESLTQH) are Cytoplasmic-facing. Residues 209 to 229 (VAGLLFLMTGIFCTISLCTYA) form a helical membrane-spanning segment. Topologically, residues 230-257 (ASVSYDLNRVPKLIYSLPHDVEHGYSWS) are extracellular. The chain crosses the membrane as a helical span at residues 258 to 278 (IFCAWCSLGFIVAAGGLCIAY). At 279–297 (PFISRTKIAHLKSGRDSTV) the chain is on the cytoplasmic side.

The protein belongs to the TMEM178 family. Interacts with STIM1.

It localises to the endoplasmic reticulum membrane. Its function is as follows. Acts as a negative regulator of osteoclast differentiation in basal and inflammatory conditions by regulating TNFSF11-induced Ca (2+) fluxes, thereby controlling the induction of NFATC1. The protein is Transmembrane protein 178A (Tmem178a) of Rattus norvegicus (Rat).